The chain runs to 278 residues: MRIIVAEDIGFCSGVRRALKMTLSEINENEKIYTLGEIVHNKTVVDSLRKRGVNVLQENIIPEDAKNSSLIIRAHGISRDQLFELQKVFKKIVDTTCPIVHNLFQTASRIHQEGYRIVVFGKESHPEMSALKGYVKDATITLKPPELSGRICIMSQTTMSIDEFYDFVVKSISQSKFSEIRIINTVCEITARREKEAQKIAKQVDLMIIIGGKNSSNTSKLTKIASKFTRAIQIETPEEVDKINFDKVEMIGITTGTSTPEEDVKTVIDKIKCRRERK.

Cys-12 serves as a coordination point for [4Fe-4S] cluster. Positions 40 and 75 each coordinate (2E)-4-hydroxy-3-methylbut-2-enyl diphosphate. Dimethylallyl diphosphate is bound by residues His-40 and His-75. The isopentenyl diphosphate site is built by His-40 and His-75. Cys-97 provides a ligand contact to [4Fe-4S] cluster. His-125 serves as a coordination point for (2E)-4-hydroxy-3-methylbut-2-enyl diphosphate. His-125 serves as a coordination point for dimethylallyl diphosphate. His-125 contributes to the isopentenyl diphosphate binding site. Glu-127 functions as the Proton donor in the catalytic mechanism. Residue Thr-157 coordinates (2E)-4-hydroxy-3-methylbut-2-enyl diphosphate. Cys-187 contributes to the [4Fe-4S] cluster binding site. (2E)-4-hydroxy-3-methylbut-2-enyl diphosphate contacts are provided by Ser-215, Ser-216, Asn-217, and Ser-258. The dimethylallyl diphosphate site is built by Ser-215, Ser-216, Asn-217, and Ser-258. Residues Ser-215, Ser-216, Asn-217, and Ser-258 each contribute to the isopentenyl diphosphate site.

It belongs to the IspH family. Requires [4Fe-4S] cluster as cofactor.

The catalysed reaction is isopentenyl diphosphate + 2 oxidized [2Fe-2S]-[ferredoxin] + H2O = (2E)-4-hydroxy-3-methylbut-2-enyl diphosphate + 2 reduced [2Fe-2S]-[ferredoxin] + 2 H(+). It carries out the reaction dimethylallyl diphosphate + 2 oxidized [2Fe-2S]-[ferredoxin] + H2O = (2E)-4-hydroxy-3-methylbut-2-enyl diphosphate + 2 reduced [2Fe-2S]-[ferredoxin] + 2 H(+). It participates in isoprenoid biosynthesis; dimethylallyl diphosphate biosynthesis; dimethylallyl diphosphate from (2E)-4-hydroxy-3-methylbutenyl diphosphate: step 1/1. Its pathway is isoprenoid biosynthesis; isopentenyl diphosphate biosynthesis via DXP pathway; isopentenyl diphosphate from 1-deoxy-D-xylulose 5-phosphate: step 6/6. Functionally, catalyzes the conversion of 1-hydroxy-2-methyl-2-(E)-butenyl 4-diphosphate (HMBPP) into a mixture of isopentenyl diphosphate (IPP) and dimethylallyl diphosphate (DMAPP). Acts in the terminal step of the DOXP/MEP pathway for isoprenoid precursor biosynthesis. The protein is 4-hydroxy-3-methylbut-2-enyl diphosphate reductase of Pseudothermotoga lettingae (strain ATCC BAA-301 / DSM 14385 / NBRC 107922 / TMO) (Thermotoga lettingae).